Reading from the N-terminus, the 312-residue chain is Pyrimidine-specific ribonucleoside hydrolase RihA (312 aa).

H240 is a catalytic residue.

The protein belongs to the IUNH family. RihA subfamily.

Hydrolyzes cytidine or uridine to ribose and cytosine or uracil, respectively. This chain is Pyrimidine-specific ribonucleoside hydrolase RihA, found in Shewanella woodyi (strain ATCC 51908 / MS32).